Reading from the N-terminus, the 343-residue chain is Trans-enoyl reductase ACTTS2 (343 aa).

42–45 (GDWK) serves as a coordination point for NADP(+). A substrate-binding site is contributed by 128–135 (VGITTVGQ). NADP(+) is bound by residues 162 to 165 (STAT), 185 to 188 (SPHN), and Tyr-203. 268 to 272 (GYTAL) contributes to the substrate binding site. NADP(+) is bound at residue 333–334 (VS).

Belongs to the zinc-containing alcohol dehydrogenase family. In terms of assembly, monomer.

Its pathway is mycotoxin biosynthesis. In terms of biological role, trans-enoyl reductase; part of the gene clusters that mediate the biosynthesis of the host-selective toxins (HSTs) ACT-toxins responsible for brown spot of tangerine disease by the tangerine pathotype which affects tangerines and mandarins. ACT-toxins consist of three moieties, 9,10-epoxy-8-hydroxy-9-methyl-decatrienoic acid (EDA), valine and a polyketide. ACT-toxin I is toxic to both citrus and pear; toxin II the 5''-deoxy derivative of ACT-toxin I, is highly toxic to pear and slightly toxic to citrus. On cellular level, ACT-toxins affect plasma membrane of susceptible cells and cause a sudden increase in loss of K(+) after a few minutes of toxin treatment. The acyl-CoA ligase ACTT1, the hydrolase ACTT2, the enoyl-CoA hydratases ACTT3 and ACTT6, and the acyl-CoA synthetase ACTT5 are all involved in the biosynthesis of the AK-, AF- and ACT-toxin common 9,10-epoxy-8-hydroxy-9-methyl-decatrienoic acid (EDA) structural moiety. The exact role of each enzyme, and of additional enzymes identified within the AF-toxin clusters have still to be determined. On the other hand, ACTTS1 to ACTTS4 are specific to the tangerine pathotype. The function of ACTTS3 is to elongate the polyketide chain portion of ACT-toxin that is unique to this toxin. The enoyl-reductase ACTTS2 might complement the missing enoyl-reductase (ER) domain in ACTTS3 in the synthesis of the polyketide portion of ACT-toxin. The roles of the nonribosomal peptide synthetases-related proteins ACTTS1 and ACTTS4 have also still not been elucidated. The polypeptide is Trans-enoyl reductase ACTTS2 (Alternaria alternata (Alternaria rot fungus)).